Here is a 249-residue protein sequence, read N- to C-terminus: MDFLVAVKKTVELRLSTEPSPPQRTAPLVDFTKAVGDFGIIAEYKRASPRGVVRLDLPPWAYFAELHSYASAFSVLTEPFWFLGDYRFIPIAKAFKPVLMKDFVIDRRQIEAAYGYGADAVLIIYRLVEREKAMELAEYAQRLGLTPLVEVDNAQDAREVATWGGRVVIGINARDLRTLETNLTRAFDIAKSLRGDVDYIIESGISRPEEVEKACLLYARGVLVGTSLMKNPALAKELKAAAERCLARR.

It belongs to the TrpC family.

The catalysed reaction is 1-(2-carboxyphenylamino)-1-deoxy-D-ribulose 5-phosphate + H(+) = (1S,2R)-1-C-(indol-3-yl)glycerol 3-phosphate + CO2 + H2O. It participates in amino-acid biosynthesis; L-tryptophan biosynthesis; L-tryptophan from chorismate: step 4/5. This Pyrobaculum neutrophilum (strain DSM 2338 / JCM 9278 / NBRC 100436 / V24Sta) (Thermoproteus neutrophilus) protein is Indole-3-glycerol phosphate synthase.